Reading from the N-terminus, the 289-residue chain is (+)-kolavelool synthase (289 aa).

This sequence belongs to the diterpene synthase family.

It catalyses the reaction (+)-kolavenyl diphosphate + H2O = (+)-kolavelool + diphosphate. Functionally, involved in the biosynthesis of (+)-O-methylkolavelool. Catalyzes the biosynthesis of (+)-kolavelool from (+)-kolavenyl diphosphate via the release of the diphosphate moiety through the nucleophilic addition of a water molecule. In Herpetosiphon aurantiacus (strain ATCC 23779 / DSM 785 / 114-95), this protein is (+)-kolavelool synthase.